The sequence spans 348 residues: MNEPLKSRIDFKQSTLQNEEISLKKGLDFNQDEQFVPYNPQLEAQENEGRLEGEIQSALKPRKSLWKRLITVASTILGVSVIAQAGQWIYQSWINSDWIALGAASAGGLIVIAGMGSVITEWRRIYRLRQRADERDKARELLYSHAIGNGRPFCEDLAKQAGINSQHPAYIRWQSTLHDTHNDREILELYSQLVQPILDKQARAEISRSAAESTLMIAVSPLAMVDMAFIGWRNIRLINRIAQIYGIELGYYSRLKLFRLVLVNIAFAGATELVREVGMDWLSQDLAARLSTRAAQGIGAGLLTARLGIKAMELCRPLPWIDNKPKLSDFRKELIGQLKNTLGNKKKE.

2 helical membrane passes run 69–89 and 99–119; these read LITV…GQWI and IALG…GSVI.

This sequence belongs to the UPF0283 family.

It is found in the cell inner membrane. The protein is UPF0283 membrane protein PMI1371 of Proteus mirabilis (strain HI4320).